The primary structure comprises 398 residues: Acetate kinase (398 aa).

Position 7 (Asn-7) interacts with Mg(2+). Residue Lys-14 coordinates ATP. Arg-91 serves as a coordination point for substrate. Asp-148 serves as the catalytic Proton donor/acceptor. ATP contacts are provided by residues 208 to 212 (HLGNG), 283 to 285 (DFR), and 331 to 335 (GIGEH). Glu-386 is a binding site for Mg(2+).

It belongs to the acetokinase family. As to quaternary structure, homodimer. It depends on Mg(2+) as a cofactor. Mn(2+) serves as cofactor.

Its subcellular location is the cytoplasm. The catalysed reaction is acetate + ATP = acetyl phosphate + ADP. It participates in metabolic intermediate biosynthesis; acetyl-CoA biosynthesis; acetyl-CoA from acetate: step 1/2. Catalyzes the formation of acetyl phosphate from acetate and ATP. Can also catalyze the reverse reaction. The protein is Acetate kinase of Clostridium botulinum (strain Eklund 17B / Type B).